A 312-amino-acid polypeptide reads, in one-letter code: Probable N-glycosylase/DNA lyase (312 aa).

The interval 1–22 (MRIPVGDFDLEMTQRSGQTSQP) is disordered. Residues 13–22 (TQRSGQTSQP) are compositionally biased toward polar residues. The active site involves lysine 235.

This sequence belongs to the type-1 OGG1 family.

The catalysed reaction is 2'-deoxyribonucleotide-(2'-deoxyribose 5'-phosphate)-2'-deoxyribonucleotide-DNA = a 3'-end 2'-deoxyribonucleotide-(2,3-dehydro-2,3-deoxyribose 5'-phosphate)-DNA + a 5'-end 5'-phospho-2'-deoxyribonucleoside-DNA + H(+). Its function is as follows. DNA repair enzyme that incises DNA at 8-oxoG residues. Excises 7,8-dihydro-8-oxoguanine and 2,6-diamino-4-hydroxy-5-N-methylformamidopyrimidine (FAPY) from damaged DNA. Has a beta-lyase activity that nicks DNA 3' to the lesion. This is Probable N-glycosylase/DNA lyase from Methanothermobacter thermautotrophicus (strain ATCC 29096 / DSM 1053 / JCM 10044 / NBRC 100330 / Delta H) (Methanobacterium thermoautotrophicum).